A 727-amino-acid chain; its full sequence is Fatty acid oxidation complex subunit alpha (727 aa).

The enoyl-CoA hydratase stretch occupies residues 1–200; that stretch reads MNDQQPFSAI…RQGLVDEAVP (200 aa). The 3-hydroxyacyl-CoA dehydrogenase stretch occupies residues 316-727; that stretch reads KPIHYVGILG…PPTDEDDSAS (412 aa).

In the N-terminal section; belongs to the enoyl-CoA hydratase/isomerase family. It in the central section; belongs to the 3-hydroxyacyl-CoA dehydrogenase family. As to quaternary structure, heterotetramer of two alpha chains (FadJ) and two beta chains (FadI).

The protein resides in the cytoplasm. It catalyses the reaction a (3S)-3-hydroxyacyl-CoA = a (2E)-enoyl-CoA + H2O. It carries out the reaction a 4-saturated-(3S)-3-hydroxyacyl-CoA = a (3E)-enoyl-CoA + H2O. The enzyme catalyses a (3S)-3-hydroxyacyl-CoA + NAD(+) = a 3-oxoacyl-CoA + NADH + H(+). The catalysed reaction is (3S)-3-hydroxybutanoyl-CoA = (3R)-3-hydroxybutanoyl-CoA. The protein operates within lipid metabolism; fatty acid beta-oxidation. In terms of biological role, catalyzes the formation of a hydroxyacyl-CoA by addition of water on enoyl-CoA. Also exhibits 3-hydroxyacyl-CoA epimerase and 3-hydroxyacyl-CoA dehydrogenase activities. The protein is Fatty acid oxidation complex subunit alpha of Pectobacterium carotovorum subsp. carotovorum (strain PC1).